The sequence spans 431 residues: Enolase (431 aa).

Residue Gln167 coordinates (2R)-2-phosphoglycerate. Glu209 serves as the catalytic Proton donor. Residues Asp246, Glu290, and Asp317 each coordinate Mg(2+). Positions 342, 371, 372, and 393 each coordinate (2R)-2-phosphoglycerate. Residue Lys342 is the Proton acceptor of the active site.

The protein belongs to the enolase family. Component of the RNA degradosome, a multiprotein complex involved in RNA processing and mRNA degradation. Mg(2+) serves as cofactor.

It is found in the cytoplasm. Its subcellular location is the secreted. The protein localises to the cell surface. It catalyses the reaction (2R)-2-phosphoglycerate = phosphoenolpyruvate + H2O. Its pathway is carbohydrate degradation; glycolysis; pyruvate from D-glyceraldehyde 3-phosphate: step 4/5. Its function is as follows. Catalyzes the reversible conversion of 2-phosphoglycerate (2-PG) into phosphoenolpyruvate (PEP). It is essential for the degradation of carbohydrates via glycolysis. The sequence is that of Enolase from Yersinia pestis bv. Antiqua (strain Antiqua).